Consider the following 402-residue polypeptide: Tyrosine--tRNA ligase (402 aa).

Residues 47–56 carry the 'HIGH' region motif; sequence PTAPDLHLGH. The short motif at 232-236 is the 'KMSKS' region element; sequence KMSKS. Lysine 235 contributes to the ATP binding site. An S4 RNA-binding domain is found at 341–401; it reads VGILDVLKQI…GKKRFMKLNI (61 aa).

Belongs to the class-I aminoacyl-tRNA synthetase family. TyrS type 2 subfamily. Homodimer.

It is found in the cytoplasm. It carries out the reaction tRNA(Tyr) + L-tyrosine + ATP = L-tyrosyl-tRNA(Tyr) + AMP + diphosphate + H(+). In terms of biological role, catalyzes the attachment of tyrosine to tRNA(Tyr) in a two-step reaction: tyrosine is first activated by ATP to form Tyr-AMP and then transferred to the acceptor end of tRNA(Tyr). This Helicobacter pylori (strain ATCC 700392 / 26695) (Campylobacter pylori) protein is Tyrosine--tRNA ligase.